Here is a 142-residue protein sequence, read N- to C-terminus: Large ribosomal subunit protein uL11 (142 aa).

It belongs to the universal ribosomal protein uL11 family. In terms of assembly, part of the ribosomal stalk of the 50S ribosomal subunit. Interacts with L10 and the large rRNA to form the base of the stalk. L10 forms an elongated spine to which L12 dimers bind in a sequential fashion forming a multimeric L10(L12)X complex. One or more lysine residues are methylated.

Its function is as follows. Forms part of the ribosomal stalk which helps the ribosome interact with GTP-bound translation factors. This chain is Large ribosomal subunit protein uL11, found in Idiomarina loihiensis (strain ATCC BAA-735 / DSM 15497 / L2-TR).